Reading from the N-terminus, the 448-residue chain is Probable D-serine dehydratase (448 aa).

Lys-111 is subject to N6-(pyridoxal phosphate)lysine.

It belongs to the serine/threonine dehydratase family. DsdA subfamily. Requires pyridoxal 5'-phosphate as cofactor.

The enzyme catalyses D-serine = pyruvate + NH4(+). The chain is Probable D-serine dehydratase from Rhizobium etli (strain CIAT 652).